Reading from the N-terminus, the 395-residue chain is Prostaglandin D2 receptor 2 (395 aa).

The Extracellular segment spans residues 1–33 (MSANATLKPLCPILEQMSRLQSHSNTSIRYIDH). 2 N-linked (GlcNAc...) asparagine glycosylation sites follow: asparagine 4 and asparagine 25. Residues 34–56 (AAVLLHGLASLLGLVENGVILFV) traverse the membrane as a helical segment. Residues 57–67 (VGCRMRQTVVT) are Cytoplasmic-facing. Residues 68-89 (TWVLHLALSDLLASASLPFFTY) form a helical membrane-spanning segment. Residues 90-106 (FLAVGHSWELGTTFCKL) are Extracellular-facing. Cysteine 104 and cysteine 182 are oxidised to a cystine. Residues 107–127 (HSSIFFLNMFASGFLLSAISL) traverse the membrane as a helical segment. The Cytoplasmic portion of the chain corresponds to 128-146 (DRCLQVVRPVWAQNHRTVA). Residues 147–168 (AAHKVCLVLWALAVLNTVPYFV) traverse the membrane as a helical segment. At 169 to 210 (FRDTISRLDGRIMCYYNVLLLNPGPDRDATCNSRQVALAVSK) the chain is on the extracellular side. A helical transmembrane segment spans residues 211–231 (FLLAFLVPLAIIASSHAAVSL). The Cytoplasmic segment spans residues 232–247 (RLQHRGRRRPGRFVRL). The chain crosses the membrane as a helical span at residues 248–269 (VAAVVAAFALCWGPYHVFSLLE). Residues 270–288 (ARAHANPGLRPLVWRGLPF) are Extracellular-facing. Residues 289 to 308 (VTSLAFFNSVANPVLYVLTC) traverse the membrane as a helical segment. Topologically, residues 309–395 (PDMLRKLRRS…LNRALSSTSS (87 aa)) are cytoplasmic. The Involved in the recycling of CRTH2 motif lies at 330-333 (DSEL). Phosphoserine occurs at positions 331 and 345. The disordered stretch occupies residues 333–363 (LGGAGSSRRRRTSSTARSASPLALCSRPEEP).

This sequence belongs to the G-protein coupled receptor 1 family. Phosphorylated. Widespread expression. High expression in stomach, small intestine, heart and thymus. Intermediate expression in colon, spinal cord and peripheral blood and low expression in brain, skeletal muscle and spleen. Expressed also on Th2- and Tc2- type cells, eosinophils and basophils.

The protein resides in the cell membrane. In terms of biological role, receptor for prostaglandin D2 (PGD2). Coupled to the G(i)-protein. Receptor activation may result in pertussis toxin-sensitive decreases in cAMP levels and Ca(2+) mobilization. PI3K signaling is also implicated in mediating PTGDR2 effects. PGD2 induced receptor internalization. CRTH2 internalization can be regulated by diverse kinases such as, PKC, PKA, GRK2, GPRK5/GRK5 and GRK6. Receptor activation is responsible, at least in part, in immune regulation and allergic/inflammation responses. This chain is Prostaglandin D2 receptor 2 (PTGDR2), found in Homo sapiens (Human).